The primary structure comprises 1044 residues: Sarcoplasmic/endoplasmic reticulum calcium ATPase 2 (1044 aa).

Over 1-48 (MENAHTKTVEEVLGHFGVNESTGLSLEQVKKLKERWGSNELPAEEGKT) the chain is Cytoplasmic. The residue at position 38 (Ser38) is a Phosphoserine. A helical membrane pass occupies residues 49–69 (LLELVIEQFEDLLVRILLLAA). The Lumenal segment spans residues 70–89 (CISFVLAWFEEGEETITAFV). Residues 90-110 (EPFVILLILVANAIVGVWQER) form a helical membrane-spanning segment. Over 111 to 253 (NAENAIEALK…QERTPLQQKL (143 aa)) the chain is Cytoplasmic. Residues 254-273 (DEFGEQLSKVISLICIAVWI) form a helical membrane-spanning segment. Over 274–295 (INIGHFNDPVHGGSWIRGAIYY) the chain is Lumenal. Residues Tyr294 and Tyr295 each carry the 3'-nitrotyrosine modification. Residues 296 to 313 (FKIAVALAVAAIPEGLPA) traverse the membrane as a helical segment. Ca(2+)-binding residues include Val304, Ala305, Ile307, and Glu309. Topologically, residues 314–756 (VITTCLALGT…EEGRAIYNNM (443 aa)) are cytoplasmic. The active-site 4-aspartylphosphate intermediate is Asp351. 2 residues coordinate Mg(2+): Asp351 and Thr353. Thr353 contacts ATP. Phosphothreonine is present on Thr441. Glu442, Arg489, and Lys514 together coordinate ATP. Ser531 carries the phosphoserine modification. Position 559 (Arg559) interacts with ATP. The tract at residues 575–594 (MHLEDSANFIKYETNLTFVG) is interaction with HAX1. Residue Ser580 is modified to Phosphoserine. Residues Thr624, Gly625, and Asp626 each contribute to the ATP site. Phosphoserine is present on residues Ser661 and Ser663. ATP contacts are provided by Arg677 and Lys683. Asp702 lines the Mg(2+) pocket. Asn705 contributes to the ATP binding site. The chain crosses the membrane as a helical span at residues 757–776 (KQFIRYLISSNVGEVVCIFL). Asn767 and Glu770 together coordinate Ca(2+). The Lumenal segment spans residues 777-786 (TAALGFPEAL). The helical transmembrane segment at 787-807 (IPVQLLWVNLVTDGLPATALG) threads the bilayer. An interaction with PLN region spans residues 787-807 (IPVQLLWVNLVTDGLPATALG). The interval 788-1044 (PVQLLWVNLV…DTNFSDMFWS (257 aa)) is interaction with TMEM64 and PDIA3. Asn795, Thr798, and Asp799 together coordinate Ca(2+). Residues 808-827 (FNPPDLDIMNKPPRNPKEPL) are Cytoplasmic-facing. A helical transmembrane segment spans residues 828-850 (ISGWLFFRYLAIGCYVGAATVGA). Residues 851-896 (AAWWFIAADGGPRVSFYQLSHFLQCKEDNPDFDGVDCAIFESPYPM) are Lumenal-facing. Cys875 and Cys887 form a disulfide bridge. A helical transmembrane segment spans residues 897 to 916 (TMALSVLVTIEMCNALNSLS). Glu907 lines the Ca(2+) pocket. At 917–929 (ENQSLLRMPPWEN) the chain is on the cytoplasmic side. The chain crosses the membrane as a helical span at residues 930 to 948 (IWLVGSICLSMSLHFLILY). The tract at residues 931–942 (WLVGSICLSMSL) is interaction with PLN. The Lumenal portion of the chain corresponds to 949 to 963 (VEPLPLIFQITPLNL). The chain crosses the membrane as a helical span at residues 964–984 (TQWLMVLKISLPVILMDETLK). Residues 985–1044 (FVARNYLEQPGKECVQPATKSSCSLSACTDGISWPFVLLIMPLVVWVYSTDTNFSDMFWS) are Cytoplasmic-facing.

This sequence belongs to the cation transport ATPase (P-type) (TC 3.A.3) family. Type IIA subfamily. In terms of assembly, interacts with sarcolipin (SLN); the interaction inhibits ATP2A2 Ca(2+) affinity. Interacts with phospholamban (PLN); the interaction inhibits ATP2A2 Ca(2+) affinity. Interacts with myoregulin (MRLN). Interacts with ARLN and ERLN; the interactions inhibit ATP2A2 Ca(2+) affinity. Interacts with STRIT1/DWORF; the interaction results in activation of ATP2A2. Interacts with the monomeric forms of SLN, PLN, ARLN, ERLN and STRI1/DWORF. Interacts with HAX1. Interacts with S100A8 and S100A9. Interacts with SLC35G1 and STIM1. Interacts with TMEM203. Interacts with TMEM64 and PDIA3. Interacts with TMX1. Interacts with TMX2. Interacts with VMP1; VMP1 competes with PLN and SLN to prevent them from forming an inhibitory complex with ATP2A2. Interacts with ULK1. Interacts with S100A1 in a Ca(2+)-dependent manner. Interacts with TUNAR. Interacts with FLVCR2; this interaction occurs in the absence of heme and promotes ATP2A2 proteasomal degradation; this complex is dissociated upon heme binding. Interacts with FNIP1. As to quaternary structure, interacts with TRAM2 (via C-terminus). Mg(2+) serves as cofactor. Nitrated under oxidative stress. Nitration on the two tyrosine residues inhibits catalytic activity. Post-translationally, serotonylated on Gln residues by TGM2 in response to hypoxia, leading to its inactivation. As to expression, isoform 2 is highly expressed in heart and slow twitch skeletal muscle. Isoform 2 is widely expressed.

It is found in the endoplasmic reticulum membrane. The protein localises to the sarcoplasmic reticulum membrane. It carries out the reaction Ca(2+)(in) + ATP + H2O = Ca(2+)(out) + ADP + phosphate + H(+). Has different conformational states with differential Ca2+ affinity. The E1 conformational state (active form) shows high Ca(2+) affinity, while the E2 state exhibits low Ca(2+) affinity. Binding of ATP allosterically increases its affinity for subsequent binding of Ca2+. Reversibly inhibited by phospholamban (PLN) at low calcium concentrations. PLN inhibits ATP2A2 Ca(2+) affinity by disrupting its allosteric activation by ATP. Inhibited by sarcolipin (SLN) and myoregulin (MRLN). The inhibition is blocked by VMP1. Enhanced by STRIT1/DWORF; STRIT1 increases activity by displacing sarcolipin (SLN), phospholamban (PLN) and myoregulin (MRLN). Stabilizes SERCA2 in its E2 state. This magnesium-dependent enzyme catalyzes the hydrolysis of ATP coupled with the translocation of calcium from the cytosol to the sarcoplasmic reticulum lumen. Involved in autophagy in response to starvation. Upon interaction with VMP1 and activation, controls ER-isolation membrane contacts for autophagosome formation. Also modulates ER contacts with lipid droplets, mitochondria and endosomes. In coordination with FLVCR2 mediates heme-stimulated switching from mitochondrial ATP synthesis to thermogenesis. Functionally, involved in the regulation of the contraction/relaxation cycle. Acts as a regulator of TNFSF11-mediated Ca(2+) signaling pathways via its interaction with TMEM64 which is critical for the TNFSF11-induced CREB1 activation and mitochondrial ROS generation necessary for proper osteoclast generation. Association between TMEM64 and SERCA2 in the ER leads to cytosolic Ca(2+) spiking for activation of NFATC1 and production of mitochondrial ROS, thereby triggering Ca(2+) signaling cascades that promote osteoclast differentiation and activation. The sequence is that of Sarcoplasmic/endoplasmic reticulum calcium ATPase 2 from Mus musculus (Mouse).